A 715-amino-acid chain; its full sequence is Putative membrane protein IgaA homolog (715 aa).

5 consecutive transmembrane segments (helical) span residues 2–22, 214–234, 235–255, 349–369, and 663–683; these read STIVLILALLLTSLIAVGLLW, EACAICIALLLLFFALSGPTV, TLPWLVIVAVSLTCWACWYLF, NLTLIVGSLLVLVLLLIYVPL, and ATSLLLLVLIFCLVVNMVLLI.

Belongs to the IgaA family.

It is found in the cell inner membrane. This chain is Putative membrane protein IgaA homolog, found in Yersinia pestis.